The sequence spans 545 residues: Monocarboxylate transporter 8 (545 aa).

The segment at 1-98 (MALPSPASEE…VETRGTARGF (98 aa)) is disordered. Ala-2 bears the N-acetylalanine mark. Topologically, residues 2–102 (ALPSPASEEA…GTARGFQPPE (101 aa)) are cytoplasmic. Repeat copies occupy residues 29-50 (PVPE…PVPV) and 51-72 (PPPE…PLPE). Positions 29–72 (PVPEPEPEPEPEPEPDPEPVPVPPPEPQPEPEPQPLPDPAPLPE) are 2 X 22 AA approximate tandem repeats. Acidic residues predominate over residues 33–45 (PEPEPEPEPEPDP). Residues 46 to 70 (EPVPVPPPEPQPEPEPQPLPDPAPL) are compositionally biased toward pro residues. Residues 103–123 (GGFGWIVVFAATWCNGSIFGI) traverse the membrane as a helical segment. Over 124–149 (HNSVGILYSMLLEEEKEKNRQVEFQA) the chain is Extracellular. Residues 150-170 (AWVGALAMGMIFFCSPIVSIF) traverse the membrane as a helical segment. Over 171–177 (TDRLGCR) the chain is Cytoplasmic. The helical transmembrane segment at 178-198 (ITATTGAAVAFIGLHTSSFTS) threads the bilayer. Residues 199-206 (SLSLRYFT) lie on the Extracellular side of the membrane. Residues 207-227 (YGILFGCGCSFAFQPSLVILG) form a helical membrane-spanning segment. Topologically, residues 228–235 (HYFQRRLG) are cytoplasmic. The chain crosses the membrane as a helical span at residues 236–256 (LANGVVSAGSSIFSMSFPFLI). Over 257 to 264 (KMLGDKIK) the chain is Extracellular. A helical transmembrane segment spans residues 265-285 (LAQTFQVLSTFMFVLTLLSLT). The Cytoplasmic segment spans residues 286–328 (YRPLLPSSQDTPSKRGAHTLRQRFLVQFRKYFNMRVFRQRTYR). The helical transmembrane segment at 329-349 (IWAFGIAAAALGYFVPYVHLM) threads the bilayer. The Extracellular portion of the chain corresponds to 350–362 (KYVEDKFKEIKET). Residues 363-383 (WVLLVCIGATSGLGRLVSGHI) form a helical membrane-spanning segment. The Cytoplasmic portion of the chain corresponds to 384–392 (SDSIPGLKK). The helical transmembrane segment at 393–413 (IYLQVLSFLLLGLMSMMIPLC) threads the bilayer. Residues 414-415 (RD) are Extracellular-facing. Residues 416–436 (FGGLIVVCLFLGLCDGFFITI) form a helical membrane-spanning segment. At 437–453 (MAPIAFELVGPMQASQA) the chain is on the cytoplasmic side. A helical membrane pass occupies residues 454–474 (IGYLLGMMALPMIAGPPIAGL). The Extracellular segment spans residues 475 to 483 (LRNCFGDYH). The helical transmembrane segment at 484–504 (VAFYFAGVPPIIGAVILFFVP) threads the bilayer. Residues 505–545 (LMHQRMFKKEQRDSSKDKMLSHDPDPNGELLPGSPTPEEPI) are Cytoplasmic-facing. The span at 514–529 (EQRDSSKDKMLSHDPD) shows a compositional bias: basic and acidic residues. The disordered stretch occupies residues 514-545 (EQRDSSKDKMLSHDPDPNGELLPGSPTPEEPI). The residue at position 540 (Thr-540) is a Phosphothreonine.

Belongs to the major facilitator superfamily. Monocarboxylate porter (TC 2.A.1.13) family. Monomer. Homodimer. Homooligomer. As to expression, expressed in cerebral microvessels.

Its subcellular location is the cell membrane. The protein localises to the apical cell membrane. It carries out the reaction 3,3',5-triiodo-L-thyronine(out) = 3,3',5-triiodo-L-thyronine(in). The catalysed reaction is 3,3',5'-triiodo-L-thyronine(out) = 3,3',5'-triiodo-L-thyronine(in). It catalyses the reaction L-thyroxine(out) = L-thyroxine(in). The enzyme catalyses 3,3'-diiodo-L-thyronine(out) = 3,3'-diiodo-L-thyronine(in). Specific thyroid hormone transmembrane transporter, that mediates both uptake and efflux of thyroid hormones across the cell membrane independently of pH or a Na(+) gradient. Major substrates are the iodothyronines T3 and T4 and to a lesser extent rT3 and 3,3-diiodothyronine (3,3'-T2). Acts as an important mediator of thyroid hormone transport, especially T3, through the blood-brain barrier. The chain is Monocarboxylate transporter 8 (Slc16a2) from Mus musculus (Mouse).